Here is a 701-residue protein sequence, read N- to C-terminus: Elongation factor G 1 (701 aa).

The tr-type G domain occupies 8 to 290 (VRYRNIGICA…AVVEYLPAPT (283 aa)). Residues 17-24 (AHVDAGKT), 88-92 (DTPGH), and 142-145 (NKMD) each bind GTP.

The protein belongs to the TRAFAC class translation factor GTPase superfamily. Classic translation factor GTPase family. EF-G/EF-2 subfamily.

Its subcellular location is the cytoplasm. Functionally, catalyzes the GTP-dependent ribosomal translocation step during translation elongation. During this step, the ribosome changes from the pre-translocational (PRE) to the post-translocational (POST) state as the newly formed A-site-bound peptidyl-tRNA and P-site-bound deacylated tRNA move to the P and E sites, respectively. Catalyzes the coordinated movement of the two tRNA molecules, the mRNA and conformational changes in the ribosome. The chain is Elongation factor G 1 from Saccharophagus degradans (strain 2-40 / ATCC 43961 / DSM 17024).